The sequence spans 96 residues: ASNSD1 upstream open reading frame protein (96 aa).

Residues 1–10 (MPSRGTRPED) are compositionally biased toward basic and acidic residues. The segment at 1 to 28 (MPSRGTRPEDSSVLIPTDNSTPHKEDLS) is disordered. The stretch at 23 to 96 (HKEDLSSKIK…ENLDKTKIKK (74 aa)) forms a coiled coil.

In terms of assembly, component of the PAQosome complex which is responsible for the biogenesis of several protein complexes and which consists of R2TP complex members RUVBL1, RUVBL2, RPAP3 and PIH1D1, URI complex members PFDN2, PFDN6, PDRG1, UXT and URI1 as well as ASDURF, POLR2E and DNAAF10/WDR92.

The protein resides in the cytoplasm. This chain is ASNSD1 upstream open reading frame protein, found in Homo sapiens (Human).